Consider the following 360-residue polypeptide: Phospho-N-acetylmuramoyl-pentapeptide-transferase (360 aa).

10 helical membrane-spanning segments follow: residues 25–45 (RTIYASLTALVISFVLGPWLI), 73–93 (TMGGVLIMSAVMFSTLLWADL), 94–114 (TNAYVWIALGVTFGFGLIGFV), 134–154 (FCLQVVVAGIAGTVLVYGLNG), 173–193 (PGYVLFAILVMVGASNAVNLT), 198–218 (GLAIVPVAIAAGTYMIFAYVA), 240–260 (VFCGALVGAGLGFLWYNAYPA), 262–282 (IFMGDVGSLPLGGALGVVAIL), 287–307 (LALVIVGGLFVMEAVSVILQV), and 337–357 (KVIVRFWIIAIMLALLSVSTL).

It belongs to the glycosyltransferase 4 family. MraY subfamily. The cofactor is Mg(2+).

The protein resides in the cell inner membrane. The enzyme catalyses UDP-N-acetyl-alpha-D-muramoyl-L-alanyl-gamma-D-glutamyl-meso-2,6-diaminopimeloyl-D-alanyl-D-alanine + di-trans,octa-cis-undecaprenyl phosphate = di-trans,octa-cis-undecaprenyl diphospho-N-acetyl-alpha-D-muramoyl-L-alanyl-D-glutamyl-meso-2,6-diaminopimeloyl-D-alanyl-D-alanine + UMP. It participates in cell wall biogenesis; peptidoglycan biosynthesis. Functionally, catalyzes the initial step of the lipid cycle reactions in the biosynthesis of the cell wall peptidoglycan: transfers peptidoglycan precursor phospho-MurNAc-pentapeptide from UDP-MurNAc-pentapeptide onto the lipid carrier undecaprenyl phosphate, yielding undecaprenyl-pyrophosphoryl-MurNAc-pentapeptide, known as lipid I. This Desulfatibacillum aliphaticivorans protein is Phospho-N-acetylmuramoyl-pentapeptide-transferase.